Here is a 272-residue protein sequence, read N- to C-terminus: Putative imidazole glycerol phosphate synthase subunit hisF2 (272 aa).

Aspartate 133 is a catalytic residue.

It belongs to the HisA/HisF family. Heterodimer of HisH and HisF.

Its subcellular location is the cytoplasm. It catalyses the reaction 5-[(5-phospho-1-deoxy-D-ribulos-1-ylimino)methylamino]-1-(5-phospho-beta-D-ribosyl)imidazole-4-carboxamide + L-glutamine = D-erythro-1-(imidazol-4-yl)glycerol 3-phosphate + 5-amino-1-(5-phospho-beta-D-ribosyl)imidazole-4-carboxamide + L-glutamate + H(+). It participates in amino-acid biosynthesis; L-histidine biosynthesis; L-histidine from 5-phospho-alpha-D-ribose 1-diphosphate: step 5/9. Its function is as follows. IGPS catalyzes the conversion of PRFAR and glutamine to IGP, AICAR and glutamate. The HisF subunit catalyzes the cyclization activity that produces IGP and AICAR from PRFAR using the ammonia provided by the HisH subunit. The sequence is that of Putative imidazole glycerol phosphate synthase subunit hisF2 (hisF2) from Vibrio vulnificus (strain YJ016).